We begin with the raw amino-acid sequence, 225 residues long: Uracil-DNA glycosylase (225 aa).

Catalysis depends on D64, which acts as the Proton acceptor.

Belongs to the uracil-DNA glycosylase (UDG) superfamily. UNG family.

Its subcellular location is the cytoplasm. It catalyses the reaction Hydrolyzes single-stranded DNA or mismatched double-stranded DNA and polynucleotides, releasing free uracil.. Functionally, excises uracil residues from the DNA which can arise as a result of misincorporation of dUMP residues by DNA polymerase or due to deamination of cytosine. The polypeptide is Uracil-DNA glycosylase (Agathobacter rectalis (strain ATCC 33656 / DSM 3377 / JCM 17463 / KCTC 5835 / VPI 0990) (Eubacterium rectale)).